A 149-amino-acid polypeptide reads, in one-letter code: Large ribosomal subunit protein eL24A (149 aa).

2 stretches are compositionally biased toward basic and acidic residues: residues 93–102 and 116–125; these read KRNQRPEVRA and KAASESEKKA. The interval 93 to 149 is disordered; sequence KRNQRPEVRAAARAAALKQRKDKKAASESEKKAIKAKSAASSARGQAIKNAKAAARH.

The protein belongs to the eukaryotic ribosomal protein eL24 family. As to quaternary structure, component of the large ribosomal subunit (LSU). Mature yeast ribosomes consist of a small (40S) and a large (60S) subunit. The 40S small subunit contains 1 molecule of ribosomal RNA (18S rRNA) and at least 33 different proteins. The large 60S subunit contains 3 rRNA molecules (25S, 5.8S and 5S rRNA) and at least 46 different proteins.

The protein localises to the cytoplasm. Component of the ribosome, a large ribonucleoprotein complex responsible for the synthesis of proteins in the cell. The small ribosomal subunit (SSU) binds messenger RNAs (mRNAs) and translates the encoded message by selecting cognate aminoacyl-transfer RNA (tRNA) molecules. The large subunit (LSU) contains the ribosomal catalytic site termed the peptidyl transferase center (PTC), which catalyzes the formation of peptide bonds, thereby polymerizing the amino acids delivered by tRNAs into a polypeptide chain. The nascent polypeptides leave the ribosome through a tunnel in the LSU and interact with protein factors that function in enzymatic processing, targeting, and the membrane insertion of nascent chains at the exit of the ribosomal tunnel. The sequence is that of Large ribosomal subunit protein eL24A (rpl2401) from Schizosaccharomyces pombe (strain 972 / ATCC 24843) (Fission yeast).